Consider the following 465-residue polypeptide: 23S rRNA (uracil(1939)-C(5))-methyltransferase RlmD (465 aa).

Positions 1 to 22 are disordered; that stretch reads MSEAVPTSARKSKNAPVAPGPA. The TRAM domain maps to 16–80; it reads PVAPGPAPVL…PSYEQATVVD (65 aa). [4Fe-4S] cluster is bound by residues C93, C99, C102, and C181. S-adenosyl-L-methionine-binding residues include Q289, F318, N323, E339, N367, and D388. C421 acts as the Nucleophile in catalysis.

This sequence belongs to the class I-like SAM-binding methyltransferase superfamily. RNA M5U methyltransferase family. RlmD subfamily.

The catalysed reaction is uridine(1939) in 23S rRNA + S-adenosyl-L-methionine = 5-methyluridine(1939) in 23S rRNA + S-adenosyl-L-homocysteine + H(+). In terms of biological role, catalyzes the formation of 5-methyl-uridine at position 1939 (m5U1939) in 23S rRNA. This Burkholderia cenocepacia (strain HI2424) protein is 23S rRNA (uracil(1939)-C(5))-methyltransferase RlmD.